A 146-amino-acid chain; its full sequence is Hemoglobin subunit beta-2 (146 aa).

The Globin domain occupies 2-146 (HWTAEEKQLI…VAHALARRYH (145 aa)). Heme b is bound by residues histidine 63 and histidine 92.

It belongs to the globin family. Heterotetramer of two alpha chains and two beta chains. As to expression, red blood cells.

In terms of biological role, involved in oxygen transport from the lung to the various peripheral tissues. The chain is Hemoglobin subunit beta-2 from Iguana iguana (Common iguana).